The following is a 129-amino-acid chain: Trefoil factor 2 (129 aa).

The signal sequence occupies residues 1–23; it reads MGPRGAPLLVVVLVLGLHALAEG. P-type domains are found at residues 29 to 73 and 79 to 122; these read CRCS…FHPL and EQCV…FFPQ. 7 disulfide bridges follow: Cys-29/Cys-127, Cys-31/Cys-58, Cys-42/Cys-57, Cys-52/Cys-69, Cys-81/Cys-107, Cys-91/Cys-106, and Cys-101/Cys-118.

In terms of tissue distribution, expressed in the digestive tract, where it was found predominantly in the stomach with highest expression in the antrum. It is secreted predominantly from antral mucous cells into the lumen of the gastrointestinal tract.

Its subcellular location is the secreted. Inhibits gastrointestinal motility and gastric acid secretion. Could function as a structural component of gastric mucus, possibly by stabilizing glycoproteins in the mucus gel through interactions with carbohydrate side chains. In Rattus norvegicus (Rat), this protein is Trefoil factor 2 (Tff2).